A 480-amino-acid polypeptide reads, in one-letter code: Glycogen synthase 1 (480 aa).

Residue lysine 15 coordinates ADP-alpha-D-glucose.

This sequence belongs to the glycosyltransferase 1 family. Bacterial/plant glycogen synthase subfamily.

It catalyses the reaction [(1-&gt;4)-alpha-D-glucosyl](n) + ADP-alpha-D-glucose = [(1-&gt;4)-alpha-D-glucosyl](n+1) + ADP + H(+). The protein operates within glycan biosynthesis; glycogen biosynthesis. Functionally, synthesizes alpha-1,4-glucan chains using ADP-glucose. The chain is Glycogen synthase 1 (glgA1) from Rhizobium radiobacter (Agrobacterium tumefaciens).